Consider the following 182-residue polypeptide: Plasmolipin (182 aa).

Over Met-1–Ser-35 the chain is Cytoplasmic. Ser-9 is subject to Phosphoserine. The MARVEL domain maps to Phe-32–Arg-166. Residues Arg-36–Ala-56 traverse the membrane as a helical segment. Residues Asp-57–Trp-68 are Extracellular-facing. A helical transmembrane segment spans residues Val-69–Phe-89. Residues Gln-90 to Pro-99 are Cytoplasmic-facing. The chain crosses the membrane as a helical span at residues Trp-100 to Ile-120. The Extracellular portion of the chain corresponds to Ala-121 to Ala-141. The helical transmembrane segment at Ala-142–Tyr-162 threads the bilayer. Over Gln-163–Ala-182 the chain is Cytoplasmic.

This sequence belongs to the MAL family. Forms oligomers. Post-translationally, phosphorylated.

It is found in the cell membrane. It localises to the myelin membrane. The protein localises to the apical cell membrane. Its subcellular location is the golgi apparatus. In terms of biological role, main component of the myelin sheath that plays an important role in myelin membrane biogenesis and myelination. Plays an essential function in apical endocytosis. Regulates epithelial development through the regulation of apical endocytosis. Part of the intracellular machinery that mediates basolateral-to-apical transport of ICAM-1, an essential adhesion receptor in epithelial cells, from the subapical compartment in hepatic epithelial cells. In Homo sapiens (Human), this protein is Plasmolipin.